The primary structure comprises 169 residues: Glycine-rich RNA-binding protein 8 (169 aa).

Residues 6 to 84 (YRCFVGGLAW…RVITVNEAQS (79 aa)) form the RRM domain. Position 47 is an ADP-ribosylarginine; by HopU1 (R47). Residues 80-99 (NEAQSRGSGGGGGGRGGSGG) form a disordered region. A compositionally biased stretch (gly residues) spans 86-99 (GSGGGGGGRGGSGG). The glycine-rich (GR) required for cell-to-cell movement stretch occupies residues 86 to 168 (GSGGGGGGRG…GGSYGGGGGG (83 aa)). The tract at residues 95 to 143 (GGSGGGYRSGGGGGYSGGGGGGYSGGGGGGYERRSGGYGSGGGGGGRGY) is nuclear targeting sequence (M9). The residue at position 103 (S103) is a Phosphoserine. A disordered region spans residues 130–169 (GGYGSGGGGGGRGYGGGGRREGGGYGGGDGGSYGGGGGGW).

Belongs to the GR-RBP family. As to quaternary structure, interacts with TRN1. Binds to small phloem-mobile single-stranded RNAs (ss-sRNA, e.g. small interfering RNA (siRNA) and microRNA (miRNA)) in the phloeme exudate, including viral-derived sRNA (vsiRNA). ADP-ribosylated by the Pseudomonas syringae type III effector HopU1. ADP-ribosylation reduces the ability of the protein to bind RNA. In terms of tissue distribution, ubiquitous.

The protein resides in the cytoplasm. It is found in the nucleus. Its subcellular location is the secreted. Plays a role in RNA transcription or processing during stress. Binds RNAs and DNAs sequence with a preference to single-stranded nucleic acids. Involved in mRNA alternative splicing of numerous targets by modulating splice site selection. Negatively regulates the circadian oscillations of its own transcript as well as RBG7 transcript. Forms an interlocked post-transcriptional negative feedback loop with the RBG7 autoregulatory circuit. Both proteins negatively autoregulate and reciprocally crossregulate by binding to their pre-mRNAs and promoting unproductive splicing coupled to degradation via the NMD pathway. Target of the Pseudomonas syringae type III effector HopU1. Mediates cell-to-cell trafficking of RNA interference (RNAi) signals (small RNAs (sRNA), e.g. small interfering RNA (siRNA) and microRNA (miRNA)) which regulate growth and development, as well as responses to environmental inputs, including pathogen attack; can compromise zucchini yellow mosaic virus (ZYMV) and tobacco rattle virus (TRV) infections at the early stage. This is Glycine-rich RNA-binding protein 8 from Arabidopsis thaliana (Mouse-ear cress).